A 345-amino-acid polypeptide reads, in one-letter code: uncharacterized protein (345 aa).

Positions 1–198 constitute a CNNM transmembrane domain; the sequence is MDVLSAVLLA…LSEGLLDHEE (198 aa). The next 2 helical transmembrane spans lie at 3–23 and 95–115; these read VLSA…FVGA and VPPA…HVLL. 2 CBS domains span residues 217–280 and 285–342; these read AVPL…PQTV and VVRP…MRDG. A helical transmembrane segment spans residues 312–332; it reads LALVTADNGSVVGMVALEDVV.

Belongs to the TerC family.

Its subcellular location is the cell membrane. This is an uncharacterized protein from Mycobacterium tuberculosis (strain ATCC 25618 / H37Rv).